A 468-amino-acid chain; its full sequence is ATP synthase subunit beta (468 aa).

148–155 (GGAGVGKT) is a binding site for ATP.

It belongs to the ATPase alpha/beta chains family. In terms of assembly, F-type ATPases have 2 components, CF(1) - the catalytic core - and CF(0) - the membrane proton channel. CF(1) has five subunits: alpha(3), beta(3), gamma(1), delta(1), epsilon(1). CF(0) has three main subunits: a(1), b(2) and c(9-12). The alpha and beta chains form an alternating ring which encloses part of the gamma chain. CF(1) is attached to CF(0) by a central stalk formed by the gamma and epsilon chains, while a peripheral stalk is formed by the delta and b chains.

Its subcellular location is the cell inner membrane. It catalyses the reaction ATP + H2O + 4 H(+)(in) = ADP + phosphate + 5 H(+)(out). Functionally, produces ATP from ADP in the presence of a proton gradient across the membrane. The catalytic sites are hosted primarily by the beta subunits. The polypeptide is ATP synthase subunit beta (Xanthomonas campestris pv. campestris (strain B100)).